The chain runs to 887 residues: Serine/threonine-protein kinase greatwall (887 aa).

Positions 32–843 (FGIVKPISRG…LKDLKAHPLF (812 aa)) constitute a Protein kinase domain. ATP is bound by residues 38-46 (ISRGAFGKV) and lysine 61. The active-site Proton acceptor is the aspartate 155. Phosphothreonine; by CDK1; in vitro is present on residues threonine 221 and threonine 244. Residues 321-353 (DAEAPPYFNSSRVKDSSSEQARSKKPTGSSASQ) are disordered. Serine 363 bears the Phosphoserine; by CDK1; in vitro mark. The disordered stretch occupies residues 410–435 (PKDFDKTGQGELGKFTSSPDSPPWLA). Serine 465 carries the phosphoserine; by CDK1; in vitro modification. A disordered region spans residues 556 to 624 (RDGEVSSTSE…EITPDNKGIP (69 aa)). Residues 575 to 587 (QDSSSTGMSVTEN) are compositionally biased toward polar residues. Over residues 588 to 604 (QIDRDLSHVDKSIKELS) the composition is skewed to basic and acidic residues. Positions 608–617 (SQSENSEEIT) are enriched in acidic residues. A phosphoserine; by CDK1; in vitro mark is found at serine 654 and serine 677. At threonine 748 the chain carries Phosphothreonine; by CDK1. The 44-residue stretch at 844–887 (HGMEWEELQYQPMSFIPQPDDETDTTYFEARNNAQHLKVSGFSL) folds into the AGC-kinase C-terminal domain.

The protein belongs to the protein kinase superfamily. AGC Ser/Thr protein kinase family. Interacts with arpp19 and ensa, leading to their phosphorylation. Phosphorylation at Thr-748 by CDK1 during M phase activates its kinase activity. Not active during other phases of the cell cycle. Has the ability to autophosphorylate.

Its subcellular location is the cytoplasm. It is found in the cytoskeleton. It localises to the microtubule organizing center. The protein localises to the centrosome. The protein resides in the nucleus. It catalyses the reaction L-seryl-[protein] + ATP = O-phospho-L-seryl-[protein] + ADP + H(+). The catalysed reaction is L-threonyl-[protein] + ATP = O-phospho-L-threonyl-[protein] + ADP + H(+). Its function is as follows. Serine/threonine kinase that plays a key role in M phase by acting as a regulator of mitosis entry and maintenance. Acts by promoting the inactivation of protein phosphatase 2A (PP2A) during M phase: does not directly inhibit PP2A but acts by mediating phosphorylation and subsequent activation of arpp19 and ensa at 'Ser-67', 2 phosphatase inhibitors that specifically inhibit the ppp2r2d (PR55-delta) subunit of PP2A. Inactivation of PP2A during M phase is essential to keep cyclin-B1-CDK1 activity high. Following DNA damage, it is also involved in checkpoint recovery by being inhibited. The polypeptide is Serine/threonine-protein kinase greatwall (mastl) (Xenopus laevis (African clawed frog)).